Consider the following 156-residue polypeptide: Small ribosomal subunit protein uS7 (156 aa).

This sequence belongs to the universal ribosomal protein uS7 family. As to quaternary structure, part of the 30S ribosomal subunit. Contacts proteins S9 and S11.

One of the primary rRNA binding proteins, it binds directly to 16S rRNA where it nucleates assembly of the head domain of the 30S subunit. Is located at the subunit interface close to the decoding center, probably blocks exit of the E-site tRNA. This Mycobacterium ulcerans (strain Agy99) protein is Small ribosomal subunit protein uS7.